The sequence spans 204 residues: Recombination protein RecR (204 aa).

The segment at 57 to 72 (CPTCFNYTDTDICRYC) adopts a C4-type zinc-finger fold. The 102-residue stretch at 80 to 181 (ESICVVEEPS…KLSRIAHGVP (102 aa)) folds into the Toprim domain.

The protein belongs to the RecR family.

Its function is as follows. May play a role in DNA repair. It seems to be involved in an RecBC-independent recombinational process of DNA repair. It may act with RecF and RecO. In Bdellovibrio bacteriovorus (strain ATCC 15356 / DSM 50701 / NCIMB 9529 / HD100), this protein is Recombination protein RecR.